The sequence spans 859 residues: MEQTEGVSTECAKAIKPIDGKSVHQICSGQVVLSLSTAVKELIENSVDAGATTIDLRLKDYGVDLIEVSDNGCGVEEENFEGLALKHHTSKIQEFADLTQVETFGFRGEALSSLCALSDVTISTCHGSASVGTRLVFDHNGKITQKTPYPRPKGTTVSVQHLFYTLPVRYKEFQRNIKKEYAKMVQVLQAYCIISAGVRVSCTNQLGQGKRQPVVCTSGSSGMKENIGSVFGQKQLQSLIPFVQLPPSDAVCEEYGLSTSRTPQNLFYVSGFISQCTHGAGRSATDRQFFFINQRPCDPAKVSKLVNEVYHMYNRHQYPFVVLNVSVDSECVDINVTPDKRQILLQEEKLLLAVLKTSLIGMFDSDANKLNVNQQPLLDVEGNLVKLHTAELEKPVPGKQDNSPSLKSTADEKRVASISRLREAFSLHPTKEIKSRGPETAELTRSFPSEKRGVLSSYPSDVISYRGLRGSQDKLVSPTDSPGDCMDREKIEKDSGLSSTSAGSEEGFSTPEVASSFSSDYNVSSPEDRPSQETINCGDLDCRPPGTGQSLKPEDHGYQCKALPLARLSPTNAKRFKTEERPSNVNISQRLPGPQSTSAAEVDVAIKMNKRIVLLEFSLSSLAKRMKQLQHLKAQNKHELSYRKFRAKICPGENQAAEDELRKEISKSMFAEMEILGQFNLGFIVTKLKEDLFLVDQHAADEKYNFEMLQQHTVLQAQRLITPQTLNLTAVNEAVLIENLEIFRKNGFDFVIDEDAPVTERAKLISLPTSKNWTFGPQDIDELIFMLSDSPGVMCRPSRVRQMFASRACRKSVMIGTALNASEMKKLITHMGEMDHPWNCPHGRPTMRHVANLDVISQN.

ATP-binding residues include Asn-45, Asp-70, Glu-109, Ala-110, and Leu-111. Disordered stretches follow at residues 391–413 (ELEKPVPGKQDNSPSLKSTADEK), 427–455 (LHPTKEIKSRGPETAELTRSFPSEKRGVL), and 469–555 (RGSQ…KPED). 2 stretches are compositionally biased toward basic and acidic residues: residues 427–439 (LHPTKEIKSRGPE) and 485–495 (CMDREKIEKDS). Positions 512–525 (EVASSFSSDYNVSS) are enriched in polar residues. The Nuclear localization signal signature appears at 574-577 (KRFK). The disordered stretch occupies residues 578–597 (TEERPSNVNISQRLPGPQST). Residues 583–597 (SNVNISQRLPGPQST) show a composition bias toward polar residues.

It belongs to the DNA mismatch repair MutL/HexB family. As to quaternary structure, heterodimer of PMS2 and MLH1 (MutL alpha); this interaction is required for the stability of both partners. Forms a ternary complex with MutS alpha (MSH2-MSH6) or MutS beta (MSH2-MSH3). Part of the BRCA1-associated genome surveillance complex (BASC), which contains BRCA1, MSH2, MSH6, MLH1, ATM, BLM, PMS2 and the RAD50-MRE11-NBS1 protein complex. This association could be a dynamic process changing throughout the cell cycle and within subnuclear domains. Interacts with MTMR15/FAN1.

It localises to the nucleus. The enzyme catalyses ATP + H2O = ADP + phosphate + H(+). Component of the post-replicative DNA mismatch repair system (MMR). Heterodimerizes with MLH1 to form MutL alpha. DNA repair is initiated by MutS alpha (MSH2-MSH6) or MutS beta (MSH2-MSH3) binding to a dsDNA mismatch, then MutL alpha is recruited to the heteroduplex. Assembly of the MutL-MutS-heteroduplex ternary complex in presence of RFC and PCNA is sufficient to activate endonuclease activity of PMS2. It introduces single-strand breaks near the mismatch and thus generates new entry points for the exonuclease EXO1 to degrade the strand containing the mismatch. DNA methylation would prevent cleavage and therefore assure that only the newly mutated DNA strand is going to be corrected. MutL alpha (MLH1-PMS2) interacts physically with the clamp loader subunits of DNA polymerase III, suggesting that it may play a role to recruit the DNA polymerase III to the site of the MMR. Also implicated in DNA damage signaling, a process which induces cell cycle arrest and can lead to apoptosis in case of major DNA damages. Possesses an ATPase activity, but in the absence of gross structural changes, ATP hydrolysis may not be necessary for proficient mismatch repair. The polypeptide is Mismatch repair endonuclease PMS2 (Mus musculus (Mouse)).